Here is a 117-residue protein sequence, read N- to C-terminus: Prefoldin subunit beta (117 aa).

It belongs to the prefoldin subunit beta family. In terms of assembly, heterohexamer of two alpha and four beta subunits.

The protein localises to the cytoplasm. Functionally, molecular chaperone capable of stabilizing a range of proteins. Seems to fulfill an ATP-independent, HSP70-like function in archaeal de novo protein folding. The chain is Prefoldin subunit beta from Methanosarcina mazei (strain ATCC BAA-159 / DSM 3647 / Goe1 / Go1 / JCM 11833 / OCM 88) (Methanosarcina frisia).